A 507-amino-acid chain; its full sequence is Chromosomal replication initiator protein DnaA (507 aa).

The interval 1–72 is domain I, interacts with DnaA modulators; the sequence is MNNYNKIWEI…KKITKLKFEE (72 aa). The tract at residues 72–162 is domain II; that stretch reads EKIIIEFVSE…KISFNKYNYG (91 aa). The domain III, AAA+ region stretch occupies residues 163–384; sequence NTNPKYSFDN…GALLRLLNYA (222 aa). ATP is bound by residues Gly-207, Gly-209, Lys-210, and Thr-211. Positions 385–507 are domain IV, binds dsDNA; that stretch reads QTFGYDIDIN…LELILKKINS (123 aa).

Belongs to the DnaA family. In terms of assembly, oligomerizes as a right-handed, spiral filament on DNA at oriC.

Its subcellular location is the cytoplasm. Its function is as follows. Plays an essential role in the initiation and regulation of chromosomal replication. ATP-DnaA binds to the origin of replication (oriC) to initiate formation of the DNA replication initiation complex once per cell cycle. Binds the DnaA box (a 9 base pair repeat at the origin) and separates the double-stranded (ds)DNA. Forms a right-handed helical filament on oriC DNA; dsDNA binds to the exterior of the filament while single-stranded (ss)DNA is stabiized in the filament's interior. The ATP-DnaA-oriC complex binds and stabilizes one strand of the AT-rich DNA unwinding element (DUE), permitting loading of DNA polymerase. After initiation quickly degrades to an ADP-DnaA complex that is not apt for DNA replication. Binds acidic phospholipids. This is Chromosomal replication initiator protein DnaA from Onion yellows phytoplasma (strain OY-M).